A 643-amino-acid polypeptide reads, in one-letter code: MLQIGEDVDYLLIPREVRLAGGVWRVISKPATKEAVFRERLIQFLQEEGRTLEDVARIIEKSTPHPPQPPKKAKVPRVRRVPQMVTPPLRLVVGTYDSSNGSDSELSDFDTSKVKGNRGSGKTRKVRKMPVSYLGSKFLGSDESEDDQELVEAFLRRGEKKPSAPPPRRRVNLPVPMFENNLGPQPSKGDRWREYVSQVSWGKLKQRVRGWAPRSGSEVGQAQQSSIAERAGEMRHSHTSPDLDDSSRNTGDLSDQTLITRRWKPKIKWVSLRRCRKEQVPPLAHGTAEEPPEAAENQGAGAAAEHGVEAAASQRPEAAASPRAEAAANPRAEATANPRAEAAANPRAEAAASPRAEAAANPRAEAAANPRAEATANPRAEAAANPRAEATANPRAEAAVNPRTEAAVNPRTEAAANPRAEAAVNPRAEATASPRAEAEVNQKTEATASPRAETAASPRVEAAASLRVEAAASPRAEATVSPRAEAVATPRAETAASARVEAAANLRAGVLPDQRAEAIDSQRAEGPVNQSTGATENQRVEVLADQRAGVLHDQREEAGPQAILEASADSGSRARKQVKTVRFQTPGRFSWFHMRRKAFWHTPRLPTLPKRGPRAGAGEARSLRVLRADTRADMEHREQEEQL.

The tract at residues 93-124 is disordered; that stretch reads VGTYDSSNGSDSELSDFDTSKVKGNRGSGKTR. 2 positions are modified to phosphoserine: Ser-141 and Ser-144. Disordered stretches follow at residues 156 to 191, 206 to 492, 519 to 540, 553 to 577, and 603 to 643; these read RRGE…KGDR, QRVR…TPRA, IDSQ…NQRV, DQRE…ARKQ, and PRLP…EEQL. The segment covering 218-227 has biased composition (polar residues); that stretch reads EVGQAQQSSI. The span at 230–247 shows a compositional bias: basic and acidic residues; sequence RAGEMRHSHTSPDLDDSS. The span at 248–259 shows a compositional bias: polar residues; sequence RNTGDLSDQTLI. The segment covering 261–276 has biased composition (basic residues); it reads RRWKPKIKWVSLRRCR. Low complexity-rich tracts occupy residues 294–399, 409–432, and 459–473; these read AAEN…AEAA, NPRT…EATA, and RVEA…AAAS. Over residues 528-537 the composition is skewed to polar residues; sequence VNQSTGATEN. The PxLPxI/L motif; mediates interaction with ANKRA2 signature appears at 603-609; the sequence is PRLPTLP. A compositionally biased stretch (basic and acidic residues) spans 626-643; that stretch reads LRADTRADMEHREQEEQL.

In terms of assembly, component of the 3M complex, composed of core components CUL7, CCDC8 and OBSL1. Interacts (via PxLPxI/L motif) with ANKRA2 (via ankyrin repeats); may link the 3M complex to histone deacetylases including HDAC4 and HDAC5.

The protein resides in the cytoplasm. Its subcellular location is the cytoskeleton. It is found in the microtubule organizing center. It localises to the centrosome. Core component of the 3M complex, a complex required to regulate microtubule dynamics and genome integrity. It is unclear how the 3M complex regulates microtubules, it could act by controlling the level of a microtubule stabilizer. Required for localization of CUL7 to the centrosome. The protein is Coiled-coil domain-containing protein 8 (Ccdc8) of Rattus norvegicus (Rat).